The sequence spans 218 residues: Phosphoglycolate phosphatase (218 aa).

Catalysis depends on aspartate 7, which acts as the Nucleophile. Mg(2+) contacts are provided by aspartate 7, aspartate 9, and aspartate 167.

This sequence belongs to the HAD-like hydrolase superfamily. CbbY/CbbZ/Gph/YieH family. Requires Mg(2+) as cofactor.

The catalysed reaction is 2-phosphoglycolate + H2O = glycolate + phosphate. It functions in the pathway organic acid metabolism; glycolate biosynthesis; glycolate from 2-phosphoglycolate: step 1/1. Its function is as follows. Specifically catalyzes the dephosphorylation of 2-phosphoglycolate. Is involved in the dissimilation of the intracellular 2-phosphoglycolate formed during the DNA repair of 3'-phosphoglycolate ends, a major class of DNA lesions induced by oxidative stress. In Cereibacter sphaeroides (strain ATCC 17025 / ATH 2.4.3) (Rhodobacter sphaeroides), this protein is Phosphoglycolate phosphatase.